We begin with the raw amino-acid sequence, 541 residues long: Capsid protein VP1 (541 aa).

Residues methionine 1 to arginine 224 form a shell domain region. The P1 sub-domain 1 stretch occupies residues threonine 225–glycine 277. The protruding domain stretch occupies residues threonine 225 to glutamine 541. The segment at threonine 278–leucine 416 is P2 sub-domain. Residues glutamine 298–aspartate 366 form an interaction with host receptor CD300LF region. The interval alanine 417 to glutamine 541 is P1 sub-domain 2.

It belongs to the caliciviridae capsid protein family. In terms of assembly, homodimer. Homomultimer. Interacts with the minor capsid protein VP2. Interacts (via P2 subdomain) with host receptor CD300LF (via N-terminus); this interaction requires Mg(2+) and Ca(2+), and allows viral binding and entry into the host cell. Stochioimetry is 2:2. Bile acids interact with the P domain dimer interface and act as cofactors enhancing virus binding and infectivity. Interacts with host receptor CD300LD; this interaction allows viral binding and entry into the host cell.

It localises to the virion. Its subcellular location is the host cytoplasm. Functionally, capsid protein self assembles to form an icosahedral capsid with a T=3 symmetry, about 38 nm in diameter, and consisting of 180 capsid proteins. A smaller form of capsid with a diameter of 23 nm might be capsid proteins assembled as icosahedron with T=1 symmetry. The capsid encapsulates the genomic RNA and is decorated with VP2 proteins. Mediates virion attachment to the host cell receptor CD300LF. The polypeptide is Capsid protein VP1 (Norovirus (isolate Mouse/NoV/United States/MNV1/2002/GV) (MNV-1)).